A 283-amino-acid polypeptide reads, in one-letter code: Cuticle collagen 49 (283 aa).

The first 19 residues, 1–19 (MWKFVIGSVSTAAFFVSVC), serve as a signal peptide directing secretion. Residues 90-283 (EPTKNCPAGP…GYCTCPPRTA (194 aa)) form a disordered region. Over residues 127–139 (VVIHDMPNPKECI) the composition is skewed to basic and acidic residues. The segment covering 143-155 (AGPPGPPGPPGPL) has biased composition (pro residues). The span at 185-204 (QGPPGSAGRAGPRGQAGQPG) shows a compositional bias: low complexity. The Collagen-like domain occupies 213 to 271 (GRPGPQGPLGEPGAQGEPGVDGKDGALGAPGRKAENGRPGKRGKDGVAGVPGTRGKEGE). Residues 244 to 257 (RKAENGRPGKRGKD) are compositionally biased toward basic and acidic residues.

It belongs to the cuticular collagen family. As to quaternary structure, collagen polypeptide chains are complexed within the cuticle by disulfide bonds and other types of covalent cross-links.

Functionally, probable cuticular collagen-like protein. Nematode cuticles are composed largely of collagen-like proteins. The cuticle functions both as an exoskeleton and as a barrier to protect the worm from its environment. Acts downstream of the Wnt signaling pathway, perhaps in the formation of the adult cuticle. This is Cuticle collagen 49 from Caenorhabditis elegans.